The sequence spans 386 residues: Succinate--CoA ligase [ADP-forming] subunit beta (386 aa).

The region spanning 9-244 is the ATP-grasp domain; it reads KEILRKYGVP…HDEEDPLETR (236 aa). ATP contacts are provided by residues lysine 46, 53-55, glutamate 99, cysteine 102, and glutamate 107; that span reads GRG. Residues asparagine 199 and aspartate 213 each coordinate Mg(2+). Residues asparagine 264 and 321–323 each bind substrate; that span reads GIM.

Belongs to the succinate/malate CoA ligase beta subunit family. As to quaternary structure, heterotetramer of two alpha and two beta subunits. It depends on Mg(2+) as a cofactor.

It catalyses the reaction succinate + ATP + CoA = succinyl-CoA + ADP + phosphate. The catalysed reaction is GTP + succinate + CoA = succinyl-CoA + GDP + phosphate. It participates in carbohydrate metabolism; tricarboxylic acid cycle; succinate from succinyl-CoA (ligase route): step 1/1. Functionally, succinyl-CoA synthetase functions in the citric acid cycle (TCA), coupling the hydrolysis of succinyl-CoA to the synthesis of either ATP or GTP and thus represents the only step of substrate-level phosphorylation in the TCA. The beta subunit provides nucleotide specificity of the enzyme and binds the substrate succinate, while the binding sites for coenzyme A and phosphate are found in the alpha subunit. This chain is Succinate--CoA ligase [ADP-forming] subunit beta, found in Rickettsia conorii (strain ATCC VR-613 / Malish 7).